The primary structure comprises 442 residues: MVHIKKGELTQEEKELLEVIGKGTVQEAGTLLGSKNVRVNCLDENGMTPLMHAAYKGKLDMCKLLLRHGADVNCHQHEHGYTALMFAALSGNKDITWVMLEAGAETDVVNSVGRTAAQMAAFVGQHDCVTIINNFFPREKLDYYTKPQGLDKEPKLPPKLAGPLHKIITTTNLHPVKIVMLINENPLLAEEAALNKCYKVMDLICEKCMKQRDMNEVLAMKMHYISCIFQKCINFLKDRENKLDTLIKSLLKGRASDGFPVYQEKIIRESIRKFPYCEATLLQQLVRSIAPVEIGSDPTAFSVLTQAITGQVGFVDVEFCTTCGEKGASKRCSVCKMVIYCDQTCQKTHWFAHKKICKNLKDIYEKQQLEAAKAKSEEENNSKLDVNSNCVGEERLEEAETRICQKNDNPKDSEEGEKESLQSDAGLEGLQEAAVGPQVSEE.

ANK repeat units lie at residues 45-74, 79-108, and 159-188; these read NGMT…DVNC, HGYT…ETDV, and KLAG…NPLL. The Zn(2+) site is built by cysteine 320, cysteine 323, cysteine 332, cysteine 335, cysteine 341, cysteine 345, histidine 353, and cysteine 357. Residues 320–357 form an MYND-type zinc finger; the sequence is CTTCGEKGASKRCSVCKMVIYCDQTCQKTHWFAHKKIC. The segment covering 401–421 has biased composition (basic and acidic residues); it reads TRICQKNDNPKDSEEGEKESL. The segment at 401–442 is disordered; sequence TRICQKNDNPKDSEEGEKESLQSDAGLEGLQEAAVGPQVSEE.

Interacts with the retinal-specific guanylyl cyclase GC1.

It localises to the cell projection. It is found in the cilium. In terms of biological role, may be involved in the trafficking of signaling proteins to the cilia. This is Ankyrin repeat and MYND domain-containing protein 2 (ANKMY2) from Bos taurus (Bovine).